The chain runs to 514 residues: Sugar transport protein 10 (514 aa).

Topologically, residues 1–18 are cytoplasmic; the sequence is MAGGAFVSEGGGGGRSYE. The next 10 membrane-spanning stretches (helical) occupy residues 19–39, 86–106, 113–133, 135–155, 170–190, 204–224, 285–305, 320–340, 350–370, and 389–409; these read GGVT…GLLF, LFTS…SVIT, VSMF…AFAV, VSML…ANQS, GALN…ANLI, VSLG…FILP, LIFC…VIMF, AALM…FVSI, LLFL…GSFI, and WILA…GPLG. Cys77 and Cys449 are oxidised to a cystine. Gln177 contributes to the beta-D-glucose binding site. Beta-D-glucose-binding residues include Gln295, Gln296, Asn301, and Asn332. Trp410 contacts beta-D-glucose. 2 helical membrane-spanning segments follow: residues 428-448 and 453-473; these read INVS…LTML and FGLF…IYFL. Topologically, residues 474-514 are cytoplasmic; sequence LPETKGVPIEEMGRVWKQHWFWKKYIPEDAIIGGHDDNNTN.

It belongs to the major facilitator superfamily. Sugar transporter (TC 2.A.1.1) family. As to expression, expressed in primordia of lateral roots, pollinated stigmata, and pollen tubes.

Its subcellular location is the membrane. The catalysed reaction is D-glucose(out) + H(+)(out) = D-glucose(in) + H(+)(in). It catalyses the reaction D-mannose(out) + H(+)(out) = D-mannose(in) + H(+)(in). It carries out the reaction D-galactose(in) + H(+)(in) = D-galactose(out) + H(+)(out). Functionally, hexose-H(+) symporter that catalyzes the high-affinity uptake of glucose, galactose and mannose. Proton-coupled symporter responsible for the uptake of glucose from the apoplast into the cells. The protein is Sugar transport protein 10 of Arabidopsis thaliana (Mouse-ear cress).